The sequence spans 337 residues: tRNA N6-adenosine threonylcarbamoyltransferase (337 aa).

Residues H111 and H115 each coordinate Fe cation. Substrate contacts are provided by residues 134–138 (LVSGG), D167, G180, and N272. Fe cation is bound at residue D300.

This sequence belongs to the KAE1 / TsaD family. It depends on Fe(2+) as a cofactor.

Its subcellular location is the cytoplasm. The catalysed reaction is L-threonylcarbamoyladenylate + adenosine(37) in tRNA = N(6)-L-threonylcarbamoyladenosine(37) in tRNA + AMP + H(+). Required for the formation of a threonylcarbamoyl group on adenosine at position 37 (t(6)A37) in tRNAs that read codons beginning with adenine. Is involved in the transfer of the threonylcarbamoyl moiety of threonylcarbamoyl-AMP (TC-AMP) to the N6 group of A37, together with TsaE and TsaB. TsaD likely plays a direct catalytic role in this reaction. The sequence is that of tRNA N6-adenosine threonylcarbamoyltransferase from Escherichia coli O157:H7.